Here is a 281-residue protein sequence, read N- to C-terminus: NAD kinase (281 aa).

D61 (proton acceptor) is an active-site residue. NAD(+) contacts are provided by residues 61–62 (DG), 134–135 (ND), R145, D164, 175–180 (TAYSLS), and Q234.

This sequence belongs to the NAD kinase family. It depends on a divalent metal cation as a cofactor.

It is found in the cytoplasm. The enzyme catalyses NAD(+) + ATP = ADP + NADP(+) + H(+). In terms of biological role, involved in the regulation of the intracellular balance of NAD and NADP, and is a key enzyme in the biosynthesis of NADP. Catalyzes specifically the phosphorylation on 2'-hydroxyl of the adenosine moiety of NAD to yield NADP. The polypeptide is NAD kinase (Clostridium botulinum (strain ATCC 19397 / Type A)).